The primary structure comprises 206 residues: Ion-translocating oxidoreductase complex subunit G (206 aa).

A helical membrane pass occupies residues 9–29; it reads GITLALFAAGSTGLTAVINQM. Position 174 is an FMN phosphoryl threonine (Thr174).

This sequence belongs to the RnfG family. In terms of assembly, the complex is composed of six subunits: RsxA, RsxB, RsxC, RsxD, RsxE and RsxG. Requires FMN as cofactor.

The protein resides in the cell inner membrane. Functionally, part of a membrane-bound complex that couples electron transfer with translocation of ions across the membrane. Required to maintain the reduced state of SoxR. This Salmonella typhi protein is Ion-translocating oxidoreductase complex subunit G.